A 296-amino-acid polypeptide reads, in one-letter code: NAD kinase (296 aa).

The Proton acceptor role is filled by aspartate 73. Residues 73–74 (DG), lysine 78, 151–152 (NE), arginine 178, aspartate 180, and 191–196 (TAHAMS) contribute to the NAD(+) site.

This sequence belongs to the NAD kinase family. A divalent metal cation is required as a cofactor.

It is found in the cytoplasm. The enzyme catalyses NAD(+) + ATP = ADP + NADP(+) + H(+). Involved in the regulation of the intracellular balance of NAD and NADP, and is a key enzyme in the biosynthesis of NADP. Catalyzes specifically the phosphorylation on 2'-hydroxyl of the adenosine moiety of NAD to yield NADP. The protein is NAD kinase of Francisella tularensis subsp. tularensis (strain FSC 198).